The primary structure comprises 549 residues: Probable protein kinase UbiB (549 aa).

The Protein kinase domain maps to 123–504; that stretch reads DFDETALASA…QRNNTGFSRL (382 aa). ATP is bound by residues 129–137 and Lys156; that span reads LASASIAQV. The Proton acceptor role is filled by Asp291. Residues 505 to 525 form a helical membrane-spanning segment; it reads MILGIAIAGTFWKFEMLPLWV.

It belongs to the ABC1 family. UbiB subfamily.

Its subcellular location is the cell inner membrane. Its pathway is cofactor biosynthesis; ubiquinone biosynthesis [regulation]. Functionally, is probably a protein kinase regulator of UbiI activity which is involved in aerobic coenzyme Q (ubiquinone) biosynthesis. This is Probable protein kinase UbiB from Glaesserella parasuis serovar 5 (strain SH0165) (Haemophilus parasuis).